Here is a 161-residue protein sequence, read N- to C-terminus: Cytochrome c-type biogenesis protein CcmE (161 aa).

The Cytoplasmic portion of the chain corresponds to 1–8 (MNPRRKKR). A helical; Signal-anchor for type II membrane protein membrane pass occupies residues 9-29 (LGIVLAIFIGISATIGLMLYA). The Periplasmic portion of the chain corresponds to 30 to 161 (LNQNMDLFYT…SSEQKQGSGE (132 aa)). Residues H129 and Y133 each coordinate heme. The disordered stretch occupies residues 142 to 161 (MKKTHEPLQYSSEQKQGSGE). The span at 150–161 (QYSSEQKQGSGE) shows a compositional bias: polar residues.

This sequence belongs to the CcmE/CycJ family.

It localises to the cell inner membrane. Heme chaperone required for the biogenesis of c-type cytochromes. Transiently binds heme delivered by CcmC and transfers the heme to apo-cytochromes in a process facilitated by CcmF and CcmH. The sequence is that of Cytochrome c-type biogenesis protein CcmE from Vibrio parahaemolyticus serotype O3:K6 (strain RIMD 2210633).